Consider the following 168-residue polypeptide: UPF0262 protein BBta_0898 (168 aa).

Belongs to the UPF0262 family.

The chain is UPF0262 protein BBta_0898 from Bradyrhizobium sp. (strain BTAi1 / ATCC BAA-1182).